Consider the following 436-residue polypeptide: DEAD-box ATP-dependent RNA helicase CshB (436 aa).

A Q motif motif is present at residues 4–32 (QTFTQYDFKPFLIDAVRELRFTEPTGIQQ). One can recognise a Helicase ATP-binding domain in the interval 35–209 (FPVVKKGVSV…KKYMENPEHI (175 aa)). 48–55 (SQTGSGKT) lines the ATP pocket. Residues 157-160 (DEAD) carry the DEAD box motif. The region spanning 240-388 (MLLQFKPYLA…WADLGERRRR (149 aa)) is the Helicase C-terminal domain. The interval 385–436 (RRRRKSRKKPNDELDVMATKVIKKPKKVKPNYKRKLATERDKVKRKYSNKKR) is disordered. Basic residues-rich tracts occupy residues 405–419 (VIKKPKKVKPNYKRK) and 427–436 (VKRKYSNKKR).

It belongs to the DEAD box helicase family. CshB subfamily.

Its subcellular location is the cytoplasm. The enzyme catalyses ATP + H2O = ADP + phosphate + H(+). Probable DEAD-box RNA helicase. May work in conjunction with the cold shock proteins to ensure proper initiation of transcription at low and optimal temperatures. Unwinds dsRNA in both 5'- and 3'-directions and shows RNA-dependent ATPase activity. Probably has a somewhat redundant function with CshA, as cshA can partially complement the growth effects of a cshB deletion. The sequence is that of DEAD-box ATP-dependent RNA helicase CshB from Bacillus cereus (strain ATCC 14579 / DSM 31 / CCUG 7414 / JCM 2152 / NBRC 15305 / NCIMB 9373 / NCTC 2599 / NRRL B-3711).